The sequence spans 370 residues: tRNA-specific 2-thiouridylase MnmA (370 aa).

ATP contacts are provided by residues 20–27 (GMSGGVDS) and methionine 46. Residues 106 to 108 (NPD) form an interaction with target base in tRNA region. The Nucleophile role is filled by cysteine 111. A disulfide bond links cysteine 111 and cysteine 207. Residue glycine 135 participates in ATP binding. Positions 157–159 (KDQ) are interaction with tRNA. Cysteine 207 functions as the Cysteine persulfide intermediate in the catalytic mechanism. Residues 318 to 319 (RY) form an interaction with tRNA region.

It belongs to the MnmA/TRMU family.

Its subcellular location is the cytoplasm. The enzyme catalyses S-sulfanyl-L-cysteinyl-[protein] + uridine(34) in tRNA + AH2 + ATP = 2-thiouridine(34) in tRNA + L-cysteinyl-[protein] + A + AMP + diphosphate + H(+). In terms of biological role, catalyzes the 2-thiolation of uridine at the wobble position (U34) of tRNA, leading to the formation of s(2)U34. The protein is tRNA-specific 2-thiouridylase MnmA of Polynucleobacter asymbioticus (strain DSM 18221 / CIP 109841 / QLW-P1DMWA-1) (Polynucleobacter necessarius subsp. asymbioticus).